The primary structure comprises 265 residues: Reduced viability upon starvation protein 161 (265 aa).

In terms of domain architecture, BAR spans 15–239 (HSVIIKNVDK…LDQQSRDDYA (225 aa)). Residues 126–193 (YFKEIEEAIK…NQLKTELPQL (68 aa)) adopt a coiled-coil conformation.

It is found in the cytoplasm. Its subcellular location is the cytoskeleton. Its function is as follows. Component of a cytoskeletal structure that is required for the formation of endocytic vesicles at the plasma membrane level. The sequence is that of Reduced viability upon starvation protein 161 (RVS161) from Saccharomyces cerevisiae (strain ATCC 204508 / S288c) (Baker's yeast).